Reading from the N-terminus, the 172-residue chain is Translation initiation factor IF-3 (172 aa).

It belongs to the IF-3 family. In terms of assembly, monomer.

The protein resides in the cytoplasm. IF-3 binds to the 30S ribosomal subunit and shifts the equilibrium between 70S ribosomes and their 50S and 30S subunits in favor of the free subunits, thus enhancing the availability of 30S subunits on which protein synthesis initiation begins. The polypeptide is Translation initiation factor IF-3 (Thermotoga maritima (strain ATCC 43589 / DSM 3109 / JCM 10099 / NBRC 100826 / MSB8)).